The chain runs to 192 residues: Peptidyl-tRNA hydrolase (192 aa).

His-17 serves as a coordination point for tRNA. His-22 serves as the catalytic Proton acceptor. Positions 68, 70, and 116 each coordinate tRNA.

Belongs to the PTH family. As to quaternary structure, monomer.

It localises to the cytoplasm. The catalysed reaction is an N-acyl-L-alpha-aminoacyl-tRNA + H2O = an N-acyl-L-amino acid + a tRNA + H(+). Its function is as follows. Hydrolyzes ribosome-free peptidyl-tRNAs (with 1 or more amino acids incorporated), which drop off the ribosome during protein synthesis, or as a result of ribosome stalling. Catalyzes the release of premature peptidyl moieties from peptidyl-tRNA molecules trapped in stalled 50S ribosomal subunits, and thus maintains levels of free tRNAs and 50S ribosomes. This Stenotrophomonas maltophilia (strain R551-3) protein is Peptidyl-tRNA hydrolase.